A 495-amino-acid polypeptide reads, in one-letter code: Probable cytochrome P450 4s3 (495 aa).

2 residues coordinate heme: E307 and C436.

It belongs to the cytochrome P450 family. The cofactor is heme.

Its subcellular location is the endoplasmic reticulum membrane. The protein localises to the microsome membrane. May be involved in the metabolism of insect hormones and in the breakdown of synthetic insecticides. The polypeptide is Probable cytochrome P450 4s3 (Cyp4s3) (Drosophila melanogaster (Fruit fly)).